The following is a 194-amino-acid chain: Imidazoleglycerol-phosphate dehydratase (194 aa).

The protein belongs to the imidazoleglycerol-phosphate dehydratase family.

The protein localises to the cytoplasm. The catalysed reaction is D-erythro-1-(imidazol-4-yl)glycerol 3-phosphate = 3-(imidazol-4-yl)-2-oxopropyl phosphate + H2O. It functions in the pathway amino-acid biosynthesis; L-histidine biosynthesis; L-histidine from 5-phospho-alpha-D-ribose 1-diphosphate: step 6/9. The polypeptide is Imidazoleglycerol-phosphate dehydratase (Bacillus anthracis (strain A0248)).